We begin with the raw amino-acid sequence, 105 residues long: Small ribosomal subunit protein bS18 (105 aa).

Polar residues predominate over residues 1–10 (MAEETNQQAP). Residues 1–34 (MAEETNQQAPESGASSSQPTSRPSGPRGGSGGRK) form a disordered region. Low complexity predominate over residues 12-25 (SGASSSQPTSRPSG).

Belongs to the bacterial ribosomal protein bS18 family. Part of the 30S ribosomal subunit. Forms a tight heterodimer with protein bS6.

Functionally, binds as a heterodimer with protein bS6 to the central domain of the 16S rRNA, where it helps stabilize the platform of the 30S subunit. The polypeptide is Small ribosomal subunit protein bS18 (Acidobacterium capsulatum (strain ATCC 51196 / DSM 11244 / BCRC 80197 / JCM 7670 / NBRC 15755 / NCIMB 13165 / 161)).